The sequence spans 122 residues: Large ribosomal subunit protein uL14 (122 aa).

The protein belongs to the universal ribosomal protein uL14 family. As to quaternary structure, part of the 50S ribosomal subunit. Forms a cluster with proteins L3 and L19. In the 70S ribosome, L14 and L19 interact and together make contacts with the 16S rRNA in bridges B5 and B8.

Functionally, binds to 23S rRNA. Forms part of two intersubunit bridges in the 70S ribosome. The chain is Large ribosomal subunit protein uL14 from Parvibaculum lavamentivorans (strain DS-1 / DSM 13023 / NCIMB 13966).